The chain runs to 163 residues: Staphylokinase (163 aa).

A signal peptide spans 1 to 27 (MLKRSLLFLTVLLLLFSFSSITNEVSA).

Belongs to the staphylokinase family.

Its subcellular location is the secreted. Potent plasminogen activator that converts plasminogen into plasmin. It forms a 1:1 complex with plasmin, which in turn activates other plasminogen molecules. This Staphylococcus aureus (strain MW2) protein is Staphylokinase (sak).